Consider the following 161-residue polypeptide: NADH-quinone oxidoreductase subunit I (161 aa).

4Fe-4S ferredoxin-type domains follow at residues 52–82 (LRRY…IESE) and 92–121 (KRYD…ETRV). Cys62, Cys65, Cys68, Cys72, Cys101, Cys104, Cys107, and Cys111 together coordinate [4Fe-4S] cluster.

Belongs to the complex I 23 kDa subunit family. As to quaternary structure, NDH-1 is composed of 14 different subunits. Subunits NuoA, H, J, K, L, M, N constitute the membrane sector of the complex. It depends on [4Fe-4S] cluster as a cofactor.

It is found in the cell inner membrane. It catalyses the reaction a quinone + NADH + 5 H(+)(in) = a quinol + NAD(+) + 4 H(+)(out). In terms of biological role, NDH-1 shuttles electrons from NADH, via FMN and iron-sulfur (Fe-S) centers, to quinones in the respiratory chain. The immediate electron acceptor for the enzyme in this species is believed to be ubiquinone. Couples the redox reaction to proton translocation (for every two electrons transferred, four hydrogen ions are translocated across the cytoplasmic membrane), and thus conserves the redox energy in a proton gradient. The protein is NADH-quinone oxidoreductase subunit I of Aromatoleum aromaticum (strain DSM 19018 / LMG 30748 / EbN1) (Azoarcus sp. (strain EbN1)).